The primary structure comprises 221 residues: Chalcone--flavanone isomerase (221 aa).

3 residues coordinate substrate: T52, N117, and S193.

The protein belongs to the chalcone isomerase family. In terms of tissue distribution, flowers.

The catalysed reaction is a chalcone = a flavanone.. Its pathway is secondary metabolite biosynthesis; flavonoid biosynthesis. Its function is as follows. Catalyzes the intramolecular cyclization of bicyclic chalcones into tricyclic (S)-flavanones. Responsible for the isomerization of 4,2',4',6'-tetrahydroxychalcone (also termed chalcone) into naringenin. The protein is Chalcone--flavanone isomerase (CHI) of Gentiana triflora (Clustered gentian).